The chain runs to 599 residues: Elongation factor 4 (599 aa).

In terms of domain architecture, tr-type G spans 2–184 (KNIRNFSIIA…RLVRDIPPPQ (183 aa)). GTP-binding positions include 14-19 (DHGKST) and 131-134 (NKID).

It belongs to the TRAFAC class translation factor GTPase superfamily. Classic translation factor GTPase family. LepA subfamily.

The protein localises to the cell inner membrane. It carries out the reaction GTP + H2O = GDP + phosphate + H(+). Required for accurate and efficient protein synthesis under certain stress conditions. May act as a fidelity factor of the translation reaction, by catalyzing a one-codon backward translocation of tRNAs on improperly translocated ribosomes. Back-translocation proceeds from a post-translocation (POST) complex to a pre-translocation (PRE) complex, thus giving elongation factor G a second chance to translocate the tRNAs correctly. Binds to ribosomes in a GTP-dependent manner. The polypeptide is Elongation factor 4 (Salmonella arizonae (strain ATCC BAA-731 / CDC346-86 / RSK2980)).